A 439-amino-acid chain; its full sequence is Protein ABHD8 (439 aa).

2 disordered regions span residues 49 to 70 and 124 to 156; these read AGPA…AAQG and PAGS…RPKR. A compositionally biased stretch (gly residues) spans 136–145; that stretch reads AGSGSGSGSG. Residues 146–156 are compositionally biased toward basic residues; the sequence is GRRRRARRPKR. The AB hydrolase-1 domain maps to 177–279; the sequence is VLFFIHGVGG…HKVIMINGGG (103 aa). Residues S252, D370, and H398 each act as charge relay system in the active site.

Belongs to the AB hydrolase superfamily. As to quaternary structure, interacts with NLRP3 (via NACHT and LLR domains); this interaction is enhanced in the presence of NLRP3 inflammasome inducers, such as ATP, nigericin, silica, or alum. Interacts with ZDHHC12. In terms of assembly, (Microbial infection) Interacts with SARS-CoV-2 nucleoprotein N; this interaction disrupts the NLRP3-ABHD8 association, enhancing NLRP3 stability, ultimately leading to increased inflammasome activation.

Its subcellular location is the cytoplasm. Functionally, negatively regulates NLRP3-driven inflammation. Promotes NLRP3 degradation through the chaperone-mediated autophagy (CMA) pathway, hence attenuating inflammasome activation and IL1B secretion. Acts by recruiting palmitoyltransferase ZDHHC12 to NLRP3, facilitating NLRP3 palmitoylation and subsequent degradation. This is Protein ABHD8 from Homo sapiens (Human).